Reading from the N-terminus, the 243-residue chain is uncharacterized protein (243 aa).

Belongs to the methyltransferase superfamily.

This is an uncharacterized protein from Mycobacterium tuberculosis (strain CDC 1551 / Oshkosh).